The following is a 125-amino-acid chain: Large ribosomal subunit protein bL12 (125 aa).

Belongs to the bacterial ribosomal protein bL12 family. As to quaternary structure, homodimer. Part of the ribosomal stalk of the 50S ribosomal subunit. Forms a multimeric L10(L12)X complex, where L10 forms an elongated spine to which 2 to 4 L12 dimers bind in a sequential fashion. Binds GTP-bound translation factors.

Its function is as follows. Forms part of the ribosomal stalk which helps the ribosome interact with GTP-bound translation factors. Is thus essential for accurate translation. The polypeptide is Large ribosomal subunit protein bL12 (Azoarcus sp. (strain BH72)).